Reading from the N-terminus, the 305-residue chain is Porphobilinogen deaminase (305 aa).

Cys-240 bears the S-(dipyrrolylmethanemethyl)cysteine mark.

It belongs to the HMBS family. In terms of assembly, monomer. The cofactor is dipyrromethane.

The enzyme catalyses 4 porphobilinogen + H2O = hydroxymethylbilane + 4 NH4(+). It participates in porphyrin-containing compound metabolism; protoporphyrin-IX biosynthesis; coproporphyrinogen-III from 5-aminolevulinate: step 2/4. In terms of biological role, tetrapolymerization of the monopyrrole PBG into the hydroxymethylbilane pre-uroporphyrinogen in several discrete steps. The sequence is that of Porphobilinogen deaminase from Xylella fastidiosa (strain M23).